Consider the following 418-residue polypeptide: MIHSLFLINSSGDIFLEKHWKSVVSRSVCDYFFEAQERATEAENVPPVIPTPHHYLLSVYRHKIFFVAVIQTEVPPLFVIEFLHRVVDTFQDYFGVCSEPVIKDNVVVVYEVLEEMLDNGFPLATESNILKELIKPPTILRTVVNTITGSTNVGDQLPTGQLSVVPWRRTGVKYTNNEAYFDVIEEIDAIIDKSGSTITAEIQGVIDACVKLTGMPDLTLSFMNPRLLDDVSFHPCVRFKRWESERILSFIPPDGNFRLLSYHVSAQNLVAIPVYVKHNISFRDSSSLGRFEITVGPKQTMGKTIEGVTVTSQMPKGVLNMSLTPSQGTHTFDPVTKMLSWDVGKINPQKLPSLKGTMSLQAGASKPDENPTINLQFKIQQLAISGLKVNRLDMYGEKYKPFKGIKYMTKAGKFQVRT.

The 242-residue stretch at 176 to 417 folds into the MHD domain; that stretch reads NNEAYFDVIE…MTKAGKFQVR (242 aa).

The protein belongs to the adaptor complexes medium subunit family. As to quaternary structure, AP-3 associates with the BLOC-1 complex. Adaptor protein complex 3 (AP-3) is a heterotetramer composed of two large adaptins (delta-type subunit AP3D1 and beta-type subunit AP3B1 or AP3B2), a medium adaptin (mu-type subunit AP3M1 or AP3M2) and a small adaptin (sigma-type subunit APS1 or AP3S2).

The protein localises to the golgi apparatus. It is found in the cytoplasmic vesicle membrane. Functionally, part of the AP-3 complex, an adaptor-related complex which is not clathrin-associated. The complex is associated with the Golgi region as well as more peripheral structures. It facilitates the budding of vesicles from the Golgi membrane and may be directly involved in trafficking to lysosomes. In concert with the BLOC-1 complex, AP-3 is required to target cargos into vesicles assembled at cell bodies for delivery into neurites and nerve terminals. This Homo sapiens (Human) protein is AP-3 complex subunit mu-2 (AP3M2).